Reading from the N-terminus, the 200-residue chain is Systemin (200 aa).

The interval 1–33 (MGTPSYDIKNKGDDMQEEPKVKLHHEKGGDEKE) is disordered. 2 propeptides span residues 1-178 (MGTP…REDL) and 197-200 (NNKL). Residues 3-8 (TPSYDI) form a 1; truncated repeat. Positions 8 to 33 (IKNKGDDMQEEPKVKLHHEKGGDEKE) are enriched in basic and acidic residues. 4 repeat units span residues 37–45 (EKETPSQDI), 80–88 (EKETISQYI), 117–125 (EKETPSQDI), and 145–153 (DKETPSQDI). 2 disordered regions span residues 106-159 (EEEE…MEGE) and 178-200 (LAVQ…NNKL). 2 stretches are compositionally biased toward basic and acidic residues: residues 111 to 140 (EKEK…KVEH) and 146 to 158 (KETP…KMEG).

In terms of tissue distribution, all organs except the roots. Transported out of wounds to distal tissues.

Its subcellular location is the cytoplasm. In terms of biological role, activates a lipid-based signal transduction pathway in which linolenic acid is converted to jasmonic acid, a potent activator of defense gene transcription, including proteinase inhibitor. This Solanum lycopersicum (Tomato) protein is Systemin.